The following is a 283-amino-acid chain: Shikimate dehydrogenase (NADP(+)) (283 aa).

Shikimate is bound by residues 18-20 and Thr-66; that span reads SYS. Residue Lys-70 is the Proton acceptor of the active site. Positions 91 and 106 each coordinate shikimate. NADP(+) is bound by residues 130 to 134 and Met-225; that span reads GAGGA. A shikimate-binding site is contributed by Tyr-227. Gly-248 is a binding site for NADP(+).

The protein belongs to the shikimate dehydrogenase family. In terms of assembly, homodimer.

The enzyme catalyses shikimate + NADP(+) = 3-dehydroshikimate + NADPH + H(+). It functions in the pathway metabolic intermediate biosynthesis; chorismate biosynthesis; chorismate from D-erythrose 4-phosphate and phosphoenolpyruvate: step 4/7. Involved in the biosynthesis of the chorismate, which leads to the biosynthesis of aromatic amino acids. Catalyzes the reversible NADPH linked reduction of 3-dehydroshikimate (DHSA) to yield shikimate (SA). The protein is Shikimate dehydrogenase (NADP(+)) of Pelodictyon phaeoclathratiforme (strain DSM 5477 / BU-1).